The sequence spans 263 residues: Tryptophan synthase alpha chain (263 aa).

Residues E47 and D58 each act as proton acceptor in the active site.

The protein belongs to the TrpA family. Tetramer of two alpha and two beta chains.

It localises to the plastid. The protein localises to the chloroplast. It catalyses the reaction (1S,2R)-1-C-(indol-3-yl)glycerol 3-phosphate + L-serine = D-glyceraldehyde 3-phosphate + L-tryptophan + H2O. It participates in amino-acid biosynthesis; L-tryptophan biosynthesis; L-tryptophan from chorismate: step 5/5. Functionally, the alpha subunit is responsible for the aldol cleavage of indoleglycerol phosphate to indole and glyceraldehyde 3-phosphate. The chain is Tryptophan synthase alpha chain from Pyropia yezoensis (Susabi-nori).